An 88-amino-acid chain; its full sequence is EKC/KEOPS complex subunit SPAC4H3.13 (88 aa).

Belongs to the CTAG/PCC1 family. In terms of assembly, component of the EKC/KEOPS complex composed of at least of SPAP27G11.07c/BUD32, cgi121, gon7, pgp2 and SPAC4H3.13/PCC1; the whole complex dimerizes.

The protein resides in the cytoplasm. Its subcellular location is the nucleus. It localises to the chromosome. The protein localises to the telomere. Its function is as follows. Component of the EKC/KEOPS complex that is required for the formation of a threonylcarbamoyl group on adenosine at position 37 (t(6)A37) in tRNAs that read codons beginning with adenine. The complex is probably involved in the transfer of the threonylcarbamoyl moiety of threonylcarbamoyl-AMP (TC-AMP) to the N6 group of A37. SPAC4H3.13/PCC1 functions as a dimerization module for the complex. The EKC/KEOPS complex also promotes both telomere uncapping and telomere elongation. The complex is required for efficient recruitment of transcriptional coactivators. This is EKC/KEOPS complex subunit SPAC4H3.13 from Schizosaccharomyces pombe (strain 972 / ATCC 24843) (Fission yeast).